The sequence spans 1102 residues: Probable leucine-rich repeat receptor-like protein kinase At5g63930 (1102 aa).

A signal peptide spans 1–26 (MVKEMMKLAVFFISLLLILLISETTG). At 27–737 (LNLEGQYLLE…GKPGGMRSSK (711 aa)) the chain is on the extracellular side. N-linked (GlcNAc...) asparagine glycans are attached at residues N54, N68, N79, and N119. LRR repeat units follow at residues 72-96 (DPEV…IGGL), 97-120 (VHLK…IGNC), 122-144 (SLEI…IGKL), 145-170 (VSLE…NLLS), 172-192 (SQLV…IGNL), 193-216 (KRLT…IGGC), 217-241 (ESLV…GMLK), 243-264 (LSQV…ISNC), 265-288 (TSLE…LGDL), 289-312 (QSLE…IGNL), 314-336 (YAIE…LGNI), 337-360 (EGLE…LSTL), 361-383 (KNLS…GFQY), 385-408 (RGLF…LGWY), 409-432 (SDLW…LCLH), 433-456 (SNMI…ITTC), 458-480 (TLVQ…LCKQ), 481-504 (VNVT…VGNC), 505-528 (SALQ…IGML), 529-552 (SQLG…IFNC), 554-576 (MLQR…VGSL), 577-602 (YQLE…NLSR), 604-624 (TELQ…LGSL), 625-649 (TGLQ…LSNL), 651-672 (MLEF…SFAN), and 674-700 (SSLL…SMSS). N-linked (GlcNAc...) asparagine glycosylation is present at N180. The N-linked (GlcNAc...) asparagine glycan is linked to N263. 2 N-linked (GlcNAc...) asparagine glycosylation sites follow: N302 and N311. N362 carries N-linked (GlcNAc...) asparagine glycosylation. N444 is a glycosylation site (N-linked (GlcNAc...) asparagine). Residues N482 and N503 are each glycosylated (N-linked (GlcNAc...) asparagine). 10 N-linked (GlcNAc...) asparagine glycosylation sites follow: N535, N564, N588, N599, N614, N632, N661, N672, N680, and N695. The chain crosses the membrane as a helical span at residues 738-758 (IIAITAAVIGGVSLMLIALIV). Residues 759–1102 (YLMRRPVRTV…TEELTQTTTP (344 aa)) lie on the Cytoplasmic side of the membrane. A phosphothreonine mark is found at T793 and T801. Residues 804–1091 (FDESFVVGRG…ERSEGEQEHL (288 aa)) form the Protein kinase domain. ATP is bound by residues 810–818 (VGRGACGTV) and K832. A phosphotyrosine mark is found at Y882 and Y919. The Proton acceptor role is filled by D932. Phosphoserine is present on S966. Y974 and Y981 each carry phosphotyrosine. At T982 the chain carries Phosphothreonine.

The protein belongs to the protein kinase superfamily. Ser/Thr protein kinase family.

It is found in the cell membrane. The enzyme catalyses L-seryl-[protein] + ATP = O-phospho-L-seryl-[protein] + ADP + H(+). It carries out the reaction L-threonyl-[protein] + ATP = O-phospho-L-threonyl-[protein] + ADP + H(+). The polypeptide is Probable leucine-rich repeat receptor-like protein kinase At5g63930 (Arabidopsis thaliana (Mouse-ear cress)).